The chain runs to 281 residues: 2-dehydro-3-deoxyphosphooctonate aldolase (281 aa).

This sequence belongs to the KdsA family.

It localises to the cytoplasm. It catalyses the reaction D-arabinose 5-phosphate + phosphoenolpyruvate + H2O = 3-deoxy-alpha-D-manno-2-octulosonate-8-phosphate + phosphate. Its pathway is carbohydrate biosynthesis; 3-deoxy-D-manno-octulosonate biosynthesis; 3-deoxy-D-manno-octulosonate from D-ribulose 5-phosphate: step 2/3. It functions in the pathway bacterial outer membrane biogenesis; lipopolysaccharide biosynthesis. The sequence is that of 2-dehydro-3-deoxyphosphooctonate aldolase from Hahella chejuensis (strain KCTC 2396).